A 417-amino-acid polypeptide reads, in one-letter code: Candidapepsin-4 (417 aa).

Positions 1–18 (MFLQNILSVLAFALLIDA) are cleaved as a signal peptide. Residues 19-75 (APVKRSTGFVTLDFNVKRSLVDPKDPTVEVKRSPLFLDIEPTEIPVDDTGRNDVGKR) constitute a propeptide, activation peptide. The region spanning 89–403 (YSADITIGSN…DLDDRKISMA (315 aa)) is the Peptidase A1 domain. Residue D107 is part of the active site. Cysteines 122 and 134 form a disulfide. N137 carries N-linked (GlcNAc...) asparagine glycosylation. D293 is an active-site residue. Cysteines 331 and 369 form a disulfide.

It belongs to the peptidase A1 family. O-glycosylated.

The protein resides in the secreted. It catalyses the reaction Preferential cleavage at the carboxyl of hydrophobic amino acids, but fails to cleave 15-Leu-|-Tyr-16, 16-Tyr-|-Leu-17 and 24-Phe-|-Phe-25 of insulin B chain. Activates trypsinogen, and degrades keratin.. In Candida albicans (strain WO-1) (Yeast), this protein is Candidapepsin-4 (SAP4).